The chain runs to 386 residues: Eukaryotic translation initiation factor 3 subunit M (386 aa).

The 163-residue stretch at Asn181–His343 folds into the PCI domain.

Belongs to the eIF-3 subunit M family. Component of the eukaryotic translation initiation factor 3 (eIF-3) complex.

Its subcellular location is the cytoplasm. In terms of biological role, component of the eukaryotic translation initiation factor 3 (eIF-3) complex, which is involved in protein synthesis of a specialized repertoire of mRNAs and, together with other initiation factors, stimulates binding of mRNA and methionyl-tRNAi to the 40S ribosome. The eIF-3 complex specifically targets and initiates translation of a subset of mRNAs involved in cell proliferation. This Aedes aegypti (Yellowfever mosquito) protein is Eukaryotic translation initiation factor 3 subunit M.